We begin with the raw amino-acid sequence, 741 residues long: MATNLSVIMILTFALWVTNPLHELQSTAAFSQTTEKINSNWESGINVDVAVTMQRHHLQQLFYRYGENDSLSVEGFRKLLQNIGIDKIKRVHIHHDHERHSDHERHSDHERHSHRGHAAAGKNSRKAFCPDLDSDNSGKNPNTSQGKGSRPAEHVNGRRNGKESASSSEVTSAVYNTVSEGTHFLETIETPKPGRRTKDINPSTPPSITEKSRVGRLSRLARRKGNDSVSEPRKSFMYSRTSNDNIQECFNATKLLTSHGMSVQALLNATEFNYLCPAIINQIDARSCLIHTASEKKAEIPPKTYSLQIAWLGGFIAISIISFLSLLGVILVPLMNRVFFKFLLSFLVALAVGTLSGDALLHLLPHSHASHHHSHSHEEPAMEMKRGPLFSHLSAQNLEESSYFDSTWKGLTALGGLYFMFLVEHVLTLIKQFKDKKKKNQKKPENDEDVESKKQLSKYESQLSTNEEKVDTGERPESYLQADSQEPSPFDSQQPTLLEEEEVMIAHAHPQEVYNEYVPRGCKNKCHSHFHDTLGQSDDLIHHHHDYHHILHHHHHQNHHPHSHSQRYSREELKDAGIATLAWMVIMGDGLHNFSDGLAIGAAFTEGLSSGLSTSVAVFCHELPHELGDFAVLLKAGMTVKQAVLYNALSAMLAYLGMATGIFIGHYAENVSMWIFALTAGLFMYVALVDMVPEMLHNDASDHGCSRWGYFFLQNAGILLGFGIMLLISIFEHKIVFRINF.

The signal sequence occupies residues 1–20; it reads MATNLSVIMILTFALWVTNP. The Extracellular portion of the chain corresponds to 21-311; the sequence is LHELQSTAAF…PKTYSLQIAW (291 aa). An N-linked (GlcNAc...) asparagine glycan is attached at N68. The segment covering 95-111 has biased composition (basic and acidic residues); that stretch reads HDHERHSDHERHSDHER. Disordered regions lie at residues 95 to 172 and 189 to 213; these read HDHE…EVTS and ETPK…EKSR. Residues 135 to 147 show a composition bias toward polar residues; it reads DNSGKNPNTSQGK. N-linked (GlcNAc...) asparagine glycosylation is present at N142. The segment covering 150–162 has biased composition (basic and acidic residues); sequence RPAEHVNGRRNGK. A compositionally biased stretch (low complexity) spans 163–172; the sequence is ESASSSEVTS. The segment covering 200–209 has biased composition (polar residues); it reads INPSTPPSIT. 3 N-linked (GlcNAc...) asparagine glycosylation sites follow: N226, N251, and N268. The helical transmembrane segment at 312–332 threads the bilayer; sequence LGGFIAISIISFLSLLGVILV. Over 333 to 341 the chain is Cytoplasmic; sequence PLMNRVFFK. The helical transmembrane segment at 342–362 threads the bilayer; that stretch reads FLLSFLVALAVGTLSGDALLH. Residues 363-409 are Extracellular-facing; the sequence is LLPHSHASHHHSHSHEEPAMEMKRGPLFSHLSAQNLEESSYFDSTWK. The helical transmembrane segment at 410-430 threads the bilayer; the sequence is GLTALGGLYFMFLVEHVLTLI. Residues 431–643 lie on the Cytoplasmic side of the membrane; the sequence is KQFKDKKKKN…LKAGMTVKQA (213 aa). The disordered stretch occupies residues 434 to 494; it reads KDKKKKNQKK…QEPSPFDSQQ (61 aa). A coiled-coil region spans residues 450–475; it reads VESKKQLSKYESQLSTNEEKVDTGER. Residues S457 and S464 each carry the phosphoserine modification. Basic and acidic residues predominate over residues 466 to 477; it reads NEEKVDTGERPE. The segment covering 481-494 has biased composition (polar residues); sequence QADSQEPSPFDSQQ. A helical transmembrane segment spans residues 644 to 664; sequence VLYNALSAMLAYLGMATGIFI. The Extracellular portion of the chain corresponds to 665 to 672; that stretch reads GHYAENVS. N-linked (GlcNAc...) asparagine glycosylation is present at N670. A helical membrane pass occupies residues 673 to 693; the sequence is MWIFALTAGLFMYVALVDMVP. Topologically, residues 694–710 are cytoplasmic; it reads EMLHNDASDHGCSRWGY. The helical transmembrane segment at 711–731 threads the bilayer; sequence FFLQNAGILLGFGIMLLISIF. Over 732 to 741 the chain is Extracellular; sequence EHKIVFRINF.

Belongs to the ZIP transporter (TC 2.A.5) family. As to quaternary structure, interacts with SLC39A10; which triggers cells to undergo EMT and mitosis. Found in a complex with SLC39A6, SLC39A10 and with the 'Ser-727' phosphorylated form of STAT3 throughout mitosis. Found in a complex with SLC39A6, SLC39A10 and with NCAM1; this complex controls NCAM1 phosphorylation and integration into focal adhesion complexes during epithelial-to-mesenchymal transition (EMT). Found in a complex with SLC39A6, SLC39A10 and with GSK3B that controls NCAM1 phosphorylation. Post-translationally, cleaved on the N-terminus before locating to the plasma membrane. N-glycosylated. In terms of processing, phosphorylated by ZAP70 in response to TCR stimulation leading to its activation. Expressed in the endothelial cells of the brain capillaries.

It is found in the cell membrane. The protein resides in the cell projection. The protein localises to the lamellipodium membrane. Its subcellular location is the membrane raft. It localises to the apical cell membrane. The enzyme catalyses Zn(2+)(in) = Zn(2+)(out). Its function is as follows. Zinc-influx transporter which plays a role in zinc homeostasis and in the induction of epithelial-to-mesenchymal transition (EMT). When associated with SLC39A10, the heterodimer formed by SLC39A10 and SLC39A6 mediates cellular zinc uptake to trigger cells to undergo epithelial- to-mesenchymal transition (EMT). The SLC39A10-SLC39A6 heterodimer also controls NCAM1 phosphorylation and its integration into focal adhesion complexes during EMT. Zinc influx inactivates GSK3B, enabling unphosphorylated SNAI1 in the nucleus to down-regulate adherence genes such as CDH1, causing loss of cell adherence. In addition, the SLC39A10-SLC39A6 heterodimer plays an essentiel role in initiating mitosis by importing zinc into cells to initiate a pathway resulting in the onset of mitosis. Participates in the T-cell receptor signaling regulation by mediating cellular zinc uptake into activated lymphocytes. Regulates the zinc influx necessary for proper meiotic progression to metaphase II (MII) that allows the oocyte-to-egg transition. The polypeptide is Zinc transporter ZIP6 (Rattus norvegicus (Rat)).